The chain runs to 311 residues: Urease accessory protein UreD (311 aa).

This sequence belongs to the UreD family. UreD, UreF and UreG form a complex that acts as a GTP-hydrolysis-dependent molecular chaperone, activating the urease apoprotein by helping to assemble the nickel containing metallocenter of UreC. The UreE protein probably delivers the nickel.

The protein localises to the cytoplasm. In terms of biological role, required for maturation of urease via the functional incorporation of the urease nickel metallocenter. In Parasynechococcus marenigrum (strain WH8102), this protein is Urease accessory protein UreD.